The primary structure comprises 317 residues: MDKWQELTITVNREAEEAASNILIECGSQGVVIDDSADYLGKVGKYGEVFPEVEQVEMVTITAYYPESADMTVITAQVNERLAELTDFGLQTGQVQLTTQELAEEDWAENWKKYYEPTRITHDLTIVPSWTDYEVQAGEKIIKLDPGMAFGTGTHPTTKMSLFALEQVLRGGETVIDVGTGSGVLSVASSLLGAKEIFAYDLDDVAVRVAQENIDLNVGTENIHVTAGDLLKGIAIEADVIVANILADILVNLTDDAYRLVKDEGYLIMSGIISEKLDMVLEAAHSAGFFLETHMIQGEWNALVFKKTDAISGVIGG.

Residues threonine 158, glycine 179, aspartate 201, and asparagine 244 each coordinate S-adenosyl-L-methionine.

It belongs to the methyltransferase superfamily. PrmA family.

The protein resides in the cytoplasm. The catalysed reaction is L-lysyl-[protein] + 3 S-adenosyl-L-methionine = N(6),N(6),N(6)-trimethyl-L-lysyl-[protein] + 3 S-adenosyl-L-homocysteine + 3 H(+). In terms of biological role, methylates ribosomal protein L11. The sequence is that of Ribosomal protein L11 methyltransferase from Streptococcus mutans serotype c (strain ATCC 700610 / UA159).